The following is a 274-amino-acid chain: Protein RecA (274 aa).

43-50 (GPESSGKT) lines the ATP pocket.

The protein belongs to the RecA family.

Its subcellular location is the cytoplasm. Can catalyze the hydrolysis of ATP in the presence of single-stranded DNA, the ATP-dependent uptake of single-stranded DNA by duplex DNA, and the ATP-dependent hybridization of homologous single-stranded DNAs. It interacts with LexA causing its activation and leading to its autocatalytic cleavage. This chain is Protein RecA, found in Neisseria pharyngis.